We begin with the raw amino-acid sequence, 452 residues long: Cysteine--tRNA ligase (452 aa).

Position 27 (Cys27) interacts with Zn(2+). The 'HIGH' region signature appears at 29–39 (PTVQDHFHIGH). The Zn(2+) site is built by Asp207, His232, and Glu236. A 'KMSKS' region motif is present at residues 265-269 (KMSKS). Lys268 is a binding site for ATP.

Belongs to the class-I aminoacyl-tRNA synthetase family. Requires Zn(2+) as cofactor.

The protein resides in the cytoplasm. It catalyses the reaction tRNA(Cys) + L-cysteine + ATP = L-cysteinyl-tRNA(Cys) + AMP + diphosphate. This chain is Cysteine--tRNA ligase, found in Thermoplasma acidophilum (strain ATCC 25905 / DSM 1728 / JCM 9062 / NBRC 15155 / AMRC-C165).